Consider the following 411-residue polypeptide: Putative competence-damage inducible protein (411 aa).

The protein belongs to the CinA family.

This chain is Putative competence-damage inducible protein, found in Clostridium acetobutylicum (strain ATCC 824 / DSM 792 / JCM 1419 / IAM 19013 / LMG 5710 / NBRC 13948 / NRRL B-527 / VKM B-1787 / 2291 / W).